Reading from the N-terminus, the 225-residue chain is Protein E26 (225 aa).

In terms of assembly, interacts with proteins IE0 and IE1. Interacts with protein FP25K. Interacts with host importin alpha-16. In terms of processing, palmitoylated.

The protein localises to the host nucleus inner membrane. It is found in the virion. Its subcellular location is the host cytoplasm. The protein resides in the host nucleus. Plays a role in the sorting of ODV envelope proteins to the host inner nuclear membrane. May facilitate the fusion and release of nucleocapsids into the cytoplasm. Modulates the expression levels of IE0 and IE1. The protein is Protein E26 (DA26) of Lepidoptera (butterflies and moths).